Here is a 157-residue protein sequence, read N- to C-terminus: Phosphopantetheine adenylyltransferase (157 aa).

Position 9 (Ser9) interacts with substrate. Residues 9 to 10 and His17 each bind ATP; that span reads SF. The substrate site is built by Lys41, Leu74, and Lys88. ATP contacts are provided by residues 89–91, Glu99, and 123–129; these read GLR and YTHVSSS.

The protein belongs to the bacterial CoaD family. In terms of assembly, homohexamer. Mg(2+) serves as cofactor.

It localises to the cytoplasm. The catalysed reaction is (R)-4'-phosphopantetheine + ATP + H(+) = 3'-dephospho-CoA + diphosphate. The protein operates within cofactor biosynthesis; coenzyme A biosynthesis; CoA from (R)-pantothenate: step 4/5. Its function is as follows. Reversibly transfers an adenylyl group from ATP to 4'-phosphopantetheine, yielding dephospho-CoA (dPCoA) and pyrophosphate. The protein is Phosphopantetheine adenylyltransferase of Micrococcus luteus (strain ATCC 4698 / DSM 20030 / JCM 1464 / CCM 169 / CCUG 5858 / IAM 1056 / NBRC 3333 / NCIMB 9278 / NCTC 2665 / VKM Ac-2230) (Micrococcus lysodeikticus).